The sequence spans 134 residues: Transcription antitermination protein NusB (134 aa).

Belongs to the NusB family.

In terms of biological role, involved in transcription antitermination. Required for transcription of ribosomal RNA (rRNA) genes. Binds specifically to the boxA antiterminator sequence of the ribosomal RNA (rrn) operons. The protein is Transcription antitermination protein NusB of Shewanella loihica (strain ATCC BAA-1088 / PV-4).